Reading from the N-terminus, the 428-residue chain is Histidine--tRNA ligase (428 aa).

Belongs to the class-II aminoacyl-tRNA synthetase family.

The protein localises to the cytoplasm. The catalysed reaction is tRNA(His) + L-histidine + ATP = L-histidyl-tRNA(His) + AMP + diphosphate + H(+). In Korarchaeum cryptofilum (strain OPF8), this protein is Histidine--tRNA ligase.